The primary structure comprises 274 residues: Large ribosomal subunit protein uL2 (274 aa).

2 disordered regions span residues Lys-38 to Gly-57 and Ala-224 to Lys-256. A compositionally biased stretch (basic and acidic residues) spans Asp-229 to Asn-239.

This sequence belongs to the universal ribosomal protein uL2 family. As to quaternary structure, part of the 50S ribosomal subunit. Forms a bridge to the 30S subunit in the 70S ribosome.

One of the primary rRNA binding proteins. Required for association of the 30S and 50S subunits to form the 70S ribosome, for tRNA binding and peptide bond formation. It has been suggested to have peptidyltransferase activity; this is somewhat controversial. Makes several contacts with the 16S rRNA in the 70S ribosome. This is Large ribosomal subunit protein uL2 from Acinetobacter baumannii (strain AB307-0294).